Reading from the N-terminus, the 255-residue chain is 5-oxoprolinase subunit A (255 aa).

The protein belongs to the LamB/PxpA family. In terms of assembly, forms a complex composed of PxpA, PxpB and PxpC.

The catalysed reaction is 5-oxo-L-proline + ATP + 2 H2O = L-glutamate + ADP + phosphate + H(+). Catalyzes the cleavage of 5-oxoproline to form L-glutamate coupled to the hydrolysis of ATP to ADP and inorganic phosphate. This chain is 5-oxoprolinase subunit A, found in Corynebacterium efficiens (strain DSM 44549 / YS-314 / AJ 12310 / JCM 11189 / NBRC 100395).